We begin with the raw amino-acid sequence, 261 residues long: Ribonuclease HII (261 aa).

In terms of domain architecture, RNase H type-2 spans 71–259; it reads KYIAGVDEVG…VKEAKLHFDS (189 aa). Residues Asp-77, Glu-78, and Asp-169 each contribute to the a divalent metal cation site.

The protein belongs to the RNase HII family. Requires Mn(2+) as cofactor. Mg(2+) serves as cofactor.

The protein localises to the cytoplasm. It catalyses the reaction Endonucleolytic cleavage to 5'-phosphomonoester.. In terms of biological role, endonuclease that specifically degrades the RNA of RNA-DNA hybrids. This is Ribonuclease HII from Listeria monocytogenes serotype 4a (strain HCC23).